The following is a 360-amino-acid chain: Glutamate 5-kinase (360 aa).

Lysine 7 is an ATP binding site. Residues serine 47, aspartate 134, and asparagine 146 each coordinate substrate. Residues 166-167 (TD) and 210-216 (TGGISTK) contribute to the ATP site. One can recognise a PUA domain in the interval 275 to 356 (VGKITLDDGA…SSIIVVHRDV (82 aa)).

It belongs to the glutamate 5-kinase family.

The protein localises to the cytoplasm. It carries out the reaction L-glutamate + ATP = L-glutamyl 5-phosphate + ADP. It participates in amino-acid biosynthesis; L-proline biosynthesis; L-glutamate 5-semialdehyde from L-glutamate: step 1/2. Catalyzes the transfer of a phosphate group to glutamate to form L-glutamate 5-phosphate. This is Glutamate 5-kinase from Prochlorococcus marinus (strain MIT 9301).